A 121-amino-acid chain; its full sequence is Mu-hexatoxin-Mg1a (121 aa).

The first 20 residues, 1–20 (MMTLSPFLLLLIAAVVIGNA), serve as a signal peptide directing secretion. A propeptide spanning residues 21-80 (SEGEVKNEFEERLKDEFKDPSRSEVAEVILLRELEVLEETLFGKEMTSDTEENRNSREKR) is cleaved from the precursor. 3 disulfide bridges follow: Cys-81–Cys-95, Cys-88–Cys-102, and Cys-94–Cys-116. Lysine amide is present on Lys-120.

Belongs to the neurotoxin 14 (magi-1) family. 09 (magi-1) subfamily. In terms of tissue distribution, expressed by the venom gland.

Its subcellular location is the secreted. Its function is as follows. Insecticidal neurotoxin. Shows competition for site 3 of insect voltage-gated sodium channels (Nav). Induces flaccid paralysis when injected into lepidopteran larvae. Is not toxic to mice when injected intracranially at 20 pmol/g. The protein is Mu-hexatoxin-Mg1a of Macrothele gigas (Japanese funnel web spider).